Reading from the N-terminus, the 252-residue chain is Indole-3-glycerol phosphate synthase (252 aa).

It belongs to the TrpC family.

The enzyme catalyses 1-(2-carboxyphenylamino)-1-deoxy-D-ribulose 5-phosphate + H(+) = (1S,2R)-1-C-(indol-3-yl)glycerol 3-phosphate + CO2 + H2O. It functions in the pathway amino-acid biosynthesis; L-tryptophan biosynthesis; L-tryptophan from chorismate: step 4/5. This Listeria monocytogenes serotype 4a (strain HCC23) protein is Indole-3-glycerol phosphate synthase.